Here is a 565-residue protein sequence, read N- to C-terminus: Sulfite reductase [NADPH] hemoprotein beta-component (565 aa).

4 residues coordinate [4Fe-4S] cluster: cysteine 429, cysteine 435, cysteine 474, and cysteine 478. Residue cysteine 478 coordinates siroheme.

It belongs to the nitrite and sulfite reductase 4Fe-4S domain family. Alpha(8)-beta(8). The alpha component is a flavoprotein, the beta component is a hemoprotein. Siroheme serves as cofactor. The cofactor is [4Fe-4S] cluster.

The catalysed reaction is hydrogen sulfide + 3 NADP(+) + 3 H2O = sulfite + 3 NADPH + 4 H(+). It functions in the pathway sulfur metabolism; hydrogen sulfide biosynthesis; hydrogen sulfide from sulfite (NADPH route): step 1/1. Component of the sulfite reductase complex that catalyzes the 6-electron reduction of sulfite to sulfide. This is one of several activities required for the biosynthesis of L-cysteine from sulfate. This Shewanella halifaxensis (strain HAW-EB4) protein is Sulfite reductase [NADPH] hemoprotein beta-component.